We begin with the raw amino-acid sequence, 418 residues long: Glutamyl-tRNA reductase (418 aa).

Substrate is bound by residues 49-52 (TCNR), Ser-109, 114-116 (EPQ), and Gln-120. Cys-50 acts as the Nucleophile in catalysis. 189-194 (GAGETI) is a binding site for NADP(+).

Belongs to the glutamyl-tRNA reductase family. Homodimer.

It carries out the reaction (S)-4-amino-5-oxopentanoate + tRNA(Glu) + NADP(+) = L-glutamyl-tRNA(Glu) + NADPH + H(+). Its pathway is porphyrin-containing compound metabolism; protoporphyrin-IX biosynthesis; 5-aminolevulinate from L-glutamyl-tRNA(Glu): step 1/2. Its function is as follows. Catalyzes the NADPH-dependent reduction of glutamyl-tRNA(Glu) to glutamate 1-semialdehyde (GSA). In Cronobacter sakazakii (strain ATCC BAA-894) (Enterobacter sakazakii), this protein is Glutamyl-tRNA reductase.